Reading from the N-terminus, the 89-residue chain is Small ribosomal subunit protein uS15 (89 aa).

The protein belongs to the universal ribosomal protein uS15 family. As to quaternary structure, part of the 30S ribosomal subunit. Forms a bridge to the 50S subunit in the 70S ribosome, contacting the 23S rRNA.

Its function is as follows. One of the primary rRNA binding proteins, it binds directly to 16S rRNA where it helps nucleate assembly of the platform of the 30S subunit by binding and bridging several RNA helices of the 16S rRNA. Functionally, forms an intersubunit bridge (bridge B4) with the 23S rRNA of the 50S subunit in the ribosome. The chain is Small ribosomal subunit protein uS15 from Shewanella loihica (strain ATCC BAA-1088 / PV-4).